Reading from the N-terminus, the 315-residue chain is Ribosomal RNA small subunit methyltransferase H (315 aa).

S-adenosyl-L-methionine contacts are provided by residues 35 to 37 (GGH), aspartate 55, phenylalanine 80, aspartate 102, and glutamine 109.

Belongs to the methyltransferase superfamily. RsmH family.

Its subcellular location is the cytoplasm. It catalyses the reaction cytidine(1402) in 16S rRNA + S-adenosyl-L-methionine = N(4)-methylcytidine(1402) in 16S rRNA + S-adenosyl-L-homocysteine + H(+). Its function is as follows. Specifically methylates the N4 position of cytidine in position 1402 (C1402) of 16S rRNA. The sequence is that of Ribosomal RNA small subunit methyltransferase H from Shewanella halifaxensis (strain HAW-EB4).